A 122-amino-acid polypeptide reads, in one-letter code: Large ribosomal subunit protein uL14 (122 aa).

The protein belongs to the universal ribosomal protein uL14 family. In terms of assembly, part of the 50S ribosomal subunit. Forms a cluster with proteins L3 and L19. In the 70S ribosome, L14 and L19 interact and together make contacts with the 16S rRNA in bridges B5 and B8.

Binds to 23S rRNA. Forms part of two intersubunit bridges in the 70S ribosome. This is Large ribosomal subunit protein uL14 from Chlamydia abortus (strain DSM 27085 / S26/3) (Chlamydophila abortus).